The following is a 513-amino-acid chain: Nuclear pore complex protein NUP58 (513 aa).

Disordered stretches follow at residues 28–62 (QTNS…QPQQ), 217–239 (SVGS…GQQQ), and 356–513 (RETA…TTRR). Positions 30-50 (NSIFSQSQPQQTNSIFSQSQP) are enriched in polar residues. 2 stretches are compositionally biased toward low complexity: residues 51 to 62 (QQTNSIFSQPQQ) and 217 to 227 (SVGSQPSQGQG). Residues 356–365 (RETAKQEAAA) are compositionally biased toward basic and acidic residues. Positions 377–386 (STTSTQPSTQ) are enriched in low complexity. The span at 393-427 (SSATPGGSNPPQTSVPTSNPSSGAGFSFLNTPASG) shows a compositional bias: polar residues. Over residues 428–446 (PSSSLFATPSSTAPTSSLF) the composition is skewed to low complexity. 6 repeat units span residues 446–447 (FG), 458–459 (FG), 466–467 (FG), 473–474 (FG), 486–487 (FG), and 497–498 (FG). Residues 446 to 498 (FGPSPTPTQTPLFGSSPASTFGSTQSLFGQTTPSLTMPSQFGGATPGSGASFG) are 6 X 2 AA repeats of F-G. The span at 452–484 (PTQTPLFGSSPASTFGSTQSLFGQTTPSLTMPS) shows a compositional bias: polar residues. A compositionally biased stretch (basic residues) spans 504 to 513 (SRPKSRTTRR).

This sequence belongs to the NUP58 family. As to quaternary structure, part of the nuclear pore complex (NPC). The NPC has an eight-fold symmetrical structure comprising a central transport channel and two rings, the cytoplasmic and nuclear rings, to which eight filaments are attached. The cytoplasmic filaments have loose ends, while the nuclear filaments are joined in a distal ring, forming a nuclear basket. NPCs are highly dynamic in configuration and composition, and can be devided in 3 subcomplexes, the NUP62 subcomplex, the NUP107-160 subcomplex and the NUP93 subcomplex, containing approximately 30 different nucleoporin proteins. Interacts with GAI, NUP62, SKP1A and SKP1B. In terms of tissue distribution, ubiquitous. Higherst expression in cauline leaves, lowest in roots.

The protein resides in the nucleus envelope. It localises to the nucleus. Its subcellular location is the nuclear pore complex. In terms of biological role, involved in nucleocytoplasmic trafficking. May have regulatory roles in the gibberellin pathway, in auxin signaling and in light perception. The sequence is that of Nuclear pore complex protein NUP58 from Arabidopsis thaliana (Mouse-ear cress).